The primary structure comprises 153 residues: UPF0235 protein C15orf40 (153 aa).

Basic residues predominate over residues 1–12 (MLRLRSGLRHLR). The disordered stretch occupies residues 1–55 (MLRLRSGLRHLRATPNTRGSARLLCAEMPKKAGATTKGKSQSKEPERPLPPLGPV). Ser116 bears the Phosphoserine mark.

This sequence belongs to the UPF0235 family.

The protein is UPF0235 protein C15orf40 (C15orf40) of Homo sapiens (Human).